The sequence spans 204 residues: Ribosome maturation factor RimM (204 aa).

Residues 117 to 192 (DEDEFFSADL…EVTIDPPDDL (76 aa)) enclose the PRC barrel domain.

This sequence belongs to the RimM family. Binds ribosomal protein uS19.

It is found in the cytoplasm. Its function is as follows. An accessory protein needed during the final step in the assembly of 30S ribosomal subunit, possibly for assembly of the head region. Essential for efficient processing of 16S rRNA. May be needed both before and after RbfA during the maturation of 16S rRNA. It has affinity for free ribosomal 30S subunits but not for 70S ribosomes. The sequence is that of Ribosome maturation factor RimM from Methylobacterium nodulans (strain LMG 21967 / CNCM I-2342 / ORS 2060).